The following is a 316-amino-acid chain: 4-hydroxy-3-methylbut-2-enyl diphosphate reductase (316 aa).

Cysteine 12 is a [4Fe-4S] cluster binding site. The (2E)-4-hydroxy-3-methylbut-2-enyl diphosphate site is built by histidine 41 and histidine 74. Residues histidine 41 and histidine 74 each coordinate dimethylallyl diphosphate. Isopentenyl diphosphate is bound by residues histidine 41 and histidine 74. Cysteine 96 provides a ligand contact to [4Fe-4S] cluster. Histidine 124 contacts (2E)-4-hydroxy-3-methylbut-2-enyl diphosphate. Position 124 (histidine 124) interacts with dimethylallyl diphosphate. Residue histidine 124 participates in isopentenyl diphosphate binding. The Proton donor role is filled by glutamate 126. Residue threonine 167 coordinates (2E)-4-hydroxy-3-methylbut-2-enyl diphosphate. Position 197 (cysteine 197) interacts with [4Fe-4S] cluster. Residues serine 225, serine 226, asparagine 227, and serine 269 each contribute to the (2E)-4-hydroxy-3-methylbut-2-enyl diphosphate site. Dimethylallyl diphosphate-binding residues include serine 225, serine 226, asparagine 227, and serine 269. Residues serine 225, serine 226, asparagine 227, and serine 269 each coordinate isopentenyl diphosphate.

Belongs to the IspH family. Homodimer. [4Fe-4S] cluster is required as a cofactor.

The enzyme catalyses isopentenyl diphosphate + 2 oxidized [2Fe-2S]-[ferredoxin] + H2O = (2E)-4-hydroxy-3-methylbut-2-enyl diphosphate + 2 reduced [2Fe-2S]-[ferredoxin] + 2 H(+). It catalyses the reaction dimethylallyl diphosphate + 2 oxidized [2Fe-2S]-[ferredoxin] + H2O = (2E)-4-hydroxy-3-methylbut-2-enyl diphosphate + 2 reduced [2Fe-2S]-[ferredoxin] + 2 H(+). It participates in isoprenoid biosynthesis; dimethylallyl diphosphate biosynthesis; dimethylallyl diphosphate from (2E)-4-hydroxy-3-methylbutenyl diphosphate: step 1/1. The protein operates within isoprenoid biosynthesis; isopentenyl diphosphate biosynthesis via DXP pathway; isopentenyl diphosphate from 1-deoxy-D-xylulose 5-phosphate: step 6/6. Its function is as follows. Catalyzes the conversion of 1-hydroxy-2-methyl-2-(E)-butenyl 4-diphosphate (HMBPP) into a mixture of isopentenyl diphosphate (IPP) and dimethylallyl diphosphate (DMAPP). Acts in the terminal step of the DOXP/MEP pathway for isoprenoid precursor biosynthesis. The sequence is that of 4-hydroxy-3-methylbut-2-enyl diphosphate reductase from Escherichia coli O6:H1 (strain CFT073 / ATCC 700928 / UPEC).